A 431-amino-acid polypeptide reads, in one-letter code: Levansucrase Lscbeta (431 aa).

Sucrose-binding residues include W61, D62, A148, R218, and D219. The active-site Nucleophile is the D62. The Proton donor/acceptor role is filled by E303.

This sequence belongs to the glycosyl hydrolase 68 family. Homodimer.

The enzyme catalyses [6)-beta-D-fructofuranosyl-(2-&gt;](n) alpha-D-glucopyranoside + sucrose = [6)-beta-D-fructofuranosyl-(2-&gt;](n+1) alpha-D-glucopyranoside + D-glucose. Its activity is regulated as follows. Sucrose hydrolase activity is negatively affected by salt concentration. The levan polymerization rate is constant regardless of sucrose concentration. In terms of biological role, catalyzes the synthesis of levan, a fructose polymer, by transferring the fructosyl moiety from sucrose to a growing acceptor molecule. Also displays sucrose hydrolase activity. The protein is Levansucrase Lscbeta of Pseudomonas syringae pv. actinidiae.